The primary structure comprises 448 residues: Methionine aminopeptidase 2 (448 aa).

The span at 1 to 17 shows a compositional bias: low complexity; that stretch reads MPATAEAADAATQATDA. Residues 1 to 87 are disordered; the sequence is MPATAEAADA…QTEPPSIGLT (87 aa). Over residues 21–34 the composition is skewed to basic and acidic residues; it reads KLEENKLPEGQERG. The span at 35 to 46 shows a compositional bias: acidic residues; the sequence is PEEEEDDDDDET. The segment covering 55–71 has biased composition (basic residues); it reads KKKKKKKSGAKKKKSKT. Residue His-200 participates in substrate binding. 3 residues coordinate a divalent metal cation: Asp-220, Asp-231, and His-300. His-308 contacts substrate. A divalent metal cation-binding residues include Glu-334 and Glu-429.

It belongs to the peptidase M24A family. Methionine aminopeptidase eukaryotic type 2 subfamily. Requires Co(2+) as cofactor. Zn(2+) is required as a cofactor. It depends on Mn(2+) as a cofactor. Fe(2+) serves as cofactor.

It localises to the cytoplasm. The catalysed reaction is Release of N-terminal amino acids, preferentially methionine, from peptides and arylamides.. In terms of biological role, cotranslationally removes the N-terminal methionine from nascent proteins. The N-terminal methionine is often cleaved when the second residue in the primary sequence is small and uncharged (Met-Ala-, Cys, Gly, Pro, Ser, Thr, or Val). This Malassezia globosa (strain ATCC MYA-4612 / CBS 7966) (Dandruff-associated fungus) protein is Methionine aminopeptidase 2.